The primary structure comprises 124 residues: Large-conductance mechanosensitive channel (124 aa).

Transmembrane regions (helical) follow at residues 15–35 (MDLA…NSLV) and 67–87 (GSFL…FFLI).

It belongs to the MscL family. As to quaternary structure, homopentamer.

Its subcellular location is the cell membrane. Functionally, channel that opens in response to stretch forces in the membrane lipid bilayer. May participate in the regulation of osmotic pressure changes within the cell. This chain is Large-conductance mechanosensitive channel, found in Lactobacillus johnsonii (strain CNCM I-12250 / La1 / NCC 533).